Here is a 195-residue protein sequence, read N- to C-terminus: Casparian strip membrane protein 3 (195 aa).

The Cytoplasmic portion of the chain corresponds to 1–33; sequence MSTTIDVPESNNVAKEKVLLLGARPRPGGWKKG. Residues 34-54 traverse the membrane as a helical segment; sequence VAIMDFILRLGAIAAAPGAAA. At 55 to 86 the chain is on the extracellular side; sequence TMGTSDQTLPFFTQFFQFEASYDSFTTFQFFV. Residues 87–107 form a helical membrane-spanning segment; sequence ITMALVAGYLVLSLPFSIVVI. Over 108 to 116 the chain is Cytoplasmic; sequence IRPHAVGPR. Residues 117-137 traverse the membrane as a helical segment; the sequence is LFLIILDTVFLTLATASGASA. At 138–169 the chain is on the extracellular side; the sequence is AAIVYLAHNGNQDSNWLAICNQFGDFCAQTSG. A helical transmembrane segment spans residues 170 to 190; it reads AVVSSLVSVVIFVLLIVMSAL. The Cytoplasmic segment spans residues 191–195; the sequence is ALRRN.

It belongs to the Casparian strip membrane proteins (CASP) family. In terms of assembly, homodimer and heterodimers.

Its subcellular location is the cell membrane. Functionally, regulates membrane-cell wall junctions and localized cell wall deposition. Required for establishment of the Casparian strip membrane domain (CSD) and the subsequent formation of Casparian strips, a cell wall modification of the root endodermis that determines an apoplastic barrier between the intraorganismal apoplasm and the extraorganismal apoplasm and prevents lateral diffusion. In Glycine max (Soybean), this protein is Casparian strip membrane protein 3.